The chain runs to 179 residues: uncharacterized protein (179 aa).

The protein belongs to the CAPAB/TerDEXZ family.

This is an uncharacterized protein from Synechocystis sp. (strain ATCC 27184 / PCC 6803 / Kazusa).